The following is a 526-amino-acid chain: Phosphoenolpyruvate carboxylase (526 aa).

It belongs to the PEPCase type 2 family. In terms of assembly, homotetramer. Mg(2+) is required as a cofactor.

It carries out the reaction oxaloacetate + phosphate = phosphoenolpyruvate + hydrogencarbonate. In terms of biological role, catalyzes the irreversible beta-carboxylation of phosphoenolpyruvate (PEP) to form oxaloacetate (OAA), a four-carbon dicarboxylic acid source for the tricarboxylic acid cycle. The protein is Phosphoenolpyruvate carboxylase of Methanosarcina acetivorans (strain ATCC 35395 / DSM 2834 / JCM 12185 / C2A).